An 856-amino-acid polypeptide reads, in one-letter code: Serine/threonine-protein kinase unc-51 (856 aa).

Positions 9-275 constitute a Protein kinase domain; that stretch reads YSKRDLLGHG…FEDFFNHPFL (267 aa). Residues 15-23 and Lys39 each bind ATP; that span reads LGHGAFAIV. The active-site Proton acceptor is Asp134. The disordered stretch occupies residues 304–327; sequence PQSSLPVPKRAGSTKLDSPTPVRR. The LIR signature appears at 358-361; the sequence is FTFL. 3 disordered regions span residues 362–391, 405–471, and 520–582; these read PPRQ…PVPV, LAAA…ERMT, and PTTT…PTEP. The span at 365–385 shows a compositional bias: polar residues; that stretch reads QESSPVKQVQVHTNVSPSLTT. A compositionally biased stretch (low complexity) spans 411-436; it reads TAVPSSSSPTGSAVSAQHQHQHQQQQ. Polar residues-rich tracts occupy residues 527 to 536 and 566 to 578; these read IPKSATTANI and KYQQ…SPTA. Positions 750-856 are required for interaction with unc-14 and vab-8; that stretch reads YHQCLVRSQE…RQGFVAAVNT (107 aa).

This sequence belongs to the protein kinase superfamily. Ser/Thr protein kinase family. APG1/unc-51/ULK1 subfamily. In terms of assembly, interacts with unc-14 and vab-8. Interacts (via C-terminus) with atg-13. Interacts (via the LIR motif) with lgg-1; the interaction is direct. Requires Mg(2+) as cofactor.

The enzyme catalyses L-seryl-[protein] + ATP = O-phospho-L-seryl-[protein] + ADP + H(+). It carries out the reaction L-threonyl-[protein] + ATP = O-phospho-L-threonyl-[protein] + ADP + H(+). Functionally, protein kinase important for axonal elongation and axonal guidance. Functions in the CAN axons to direct both anterior and posterior migrations. Phosphorylates both unc-14 and vab-8. Component of the unc-51/atg-13 complex that is probably recruited by lgg-1 to preautophagosomes and is required for autophagosome formation. Interaction with autophagy related proteins such as atg-13 links it to the autophagy machinery to in turn promote P-granule degradation in somatic cells. Plays a role in mitophagy during limited food availability. Regulates cell size. Plays a role in male tail ray pattern formation. May be required for normal dauer morphogenesis. In Caenorhabditis elegans, this protein is Serine/threonine-protein kinase unc-51.